The following is a 117-amino-acid chain: Large ribosomal subunit protein uL22 (117 aa).

This sequence belongs to the universal ribosomal protein uL22 family. In terms of assembly, part of the 50S ribosomal subunit.

Functionally, this protein binds specifically to 23S rRNA; its binding is stimulated by other ribosomal proteins, e.g. L4, L17, and L20. It is important during the early stages of 50S assembly. It makes multiple contacts with different domains of the 23S rRNA in the assembled 50S subunit and ribosome. Its function is as follows. The globular domain of the protein is located near the polypeptide exit tunnel on the outside of the subunit, while an extended beta-hairpin is found that lines the wall of the exit tunnel in the center of the 70S ribosome. This is Large ribosomal subunit protein uL22 from Leptospira biflexa serovar Patoc (strain Patoc 1 / ATCC 23582 / Paris).